The following is a 511-amino-acid chain: Putative CBL-interacting protein kinase 13 (511 aa).

The Protein kinase domain maps to 25–279 (FEVGKLLGQG…AEGIMENEWF (255 aa)). ATP contacts are provided by residues 31 to 39 (LGQGNFAKV) and lysine 54. Catalysis depends on aspartate 147, which acts as the Proton acceptor. The segment at 165–194 (DFGLSAVADGMRRDGLFHTFCGTPAYVAPE) is activation loop. The interval 307 to 340 (VDAPTSPPDTPRTVDSGDVGAAPTRPRKAGSLTS) is disordered. One can recognise an NAF domain in the interval 321-383 (DSGDVGAAPT…PGFDLSGLFD (63 aa)). The tract at residues 400-429 (KHTARFVSAAPVEVIVATLEAAAAAAGMAV) is PPI.

Belongs to the protein kinase superfamily. CAMK Ser/Thr protein kinase family. SNF1 subfamily. Mn(2+) serves as cofactor.

It catalyses the reaction L-seryl-[protein] + ATP = O-phospho-L-seryl-[protein] + ADP + H(+). The catalysed reaction is L-threonyl-[protein] + ATP = O-phospho-L-threonyl-[protein] + ADP + H(+). Functionally, CIPK serine-threonine protein kinases interact with CBL proteins. Binding of a CBL protein to the regulatory NAF domain of CIPK protein lead to the activation of the kinase in a calcium-dependent manner. This chain is Putative CBL-interacting protein kinase 13 (CIPK13), found in Oryza sativa subsp. japonica (Rice).